A 73-amino-acid polypeptide reads, in one-letter code: Neurotoxin Cex13 (73 aa).

Residues 1–7 (ATGNVWA) form the signal peptide. The LCN-type CS-alpha/beta domain occupies 8–71 (KDGYLVIIKT…TWPLPDKTCG (64 aa)). Cystine bridges form between C19-C70, C23-C46, C32-C51, and C36-C53. The residue at position 70 (C70) is a Cysteine amide. A propeptide spanning residues 71–73 (GTK) is cleaved from the precursor.

The protein belongs to the long (4 C-C) scorpion toxin superfamily. Sodium channel inhibitor family. Beta subfamily. In terms of tissue distribution, expressed by the venom gland.

The protein resides in the secreted. Functionally, beta toxins bind voltage-independently at site-4 of sodium channels (Nav) and shift the voltage of activation toward more negative potentials thereby affecting sodium channel activation and promoting spontaneous and repetitive firing. This Centruroides exilicauda (Bark scorpion) protein is Neurotoxin Cex13.